The chain runs to 465 residues: Ribulose bisphosphate carboxylase large chain (465 aa).

Lysine 4 is modified (N6,N6,N6-trimethyllysine). Residues asparagine 113 and threonine 163 each contribute to the substrate site. Lysine 165 functions as the Proton acceptor in the catalytic mechanism. Lysine 167 is a substrate binding site. The Mg(2+) site is built by lysine 191, aspartate 193, and glutamate 194. N6-carboxylysine is present on lysine 191. Catalysis depends on histidine 284, which acts as the Proton acceptor. Substrate-binding residues include arginine 285, histidine 317, and serine 369.

The protein belongs to the RuBisCO large chain family. Type I subfamily. In terms of assembly, heterohexadecamer of 8 large chains and 8 small chains; disulfide-linked. The disulfide link is formed within the large subunit homodimers. Mg(2+) serves as cofactor. Post-translationally, the disulfide bond which can form in the large chain dimeric partners within the hexadecamer appears to be associated with oxidative stress and protein turnover.

The protein localises to the plastid. It localises to the chloroplast. It catalyses the reaction 2 (2R)-3-phosphoglycerate + 2 H(+) = D-ribulose 1,5-bisphosphate + CO2 + H2O. It carries out the reaction D-ribulose 1,5-bisphosphate + O2 = 2-phosphoglycolate + (2R)-3-phosphoglycerate + 2 H(+). In terms of biological role, ruBisCO catalyzes two reactions: the carboxylation of D-ribulose 1,5-bisphosphate, the primary event in carbon dioxide fixation, as well as the oxidative fragmentation of the pentose substrate in the photorespiration process. Both reactions occur simultaneously and in competition at the same active site. This Nepenthes alata (Winged pitcher plant) protein is Ribulose bisphosphate carboxylase large chain.